Reading from the N-terminus, the 127-residue chain is Small ribosomal subunit protein uS11 (127 aa).

The protein belongs to the universal ribosomal protein uS11 family. Part of the 30S ribosomal subunit. Interacts with proteins S7 and S18. Binds to IF-3.

Functionally, located on the platform of the 30S subunit, it bridges several disparate RNA helices of the 16S rRNA. Forms part of the Shine-Dalgarno cleft in the 70S ribosome. The protein is Small ribosomal subunit protein uS11 of Prosthecochloris aestuarii (strain DSM 271 / SK 413).